A 572-amino-acid chain; its full sequence is Urease subunit alpha (572 aa).

Positions 130 to 572 (GGVDTHIHFI…LPMAQRYFLF (443 aa)) constitute a Urease domain. Residues H135, H137, and K218 each coordinate Ni(2+). At K218 the chain carries N6-carboxylysine. Position 220 (H220) interacts with substrate. Ni(2+) contacts are provided by H247 and H273. H321 serves as the catalytic Proton donor. D361 serves as a coordination point for Ni(2+).

Belongs to the metallo-dependent hydrolases superfamily. Urease alpha subunit family. As to quaternary structure, heterotrimer of UreA (gamma), UreB (beta) and UreC (alpha) subunits. Three heterotrimers associate to form the active enzyme. Requires Ni cation as cofactor. Carboxylation allows a single lysine to coordinate two nickel ions.

The protein localises to the cytoplasm. It carries out the reaction urea + 2 H2O + H(+) = hydrogencarbonate + 2 NH4(+). Its pathway is nitrogen metabolism; urea degradation; CO(2) and NH(3) from urea (urease route): step 1/1. This chain is Urease subunit alpha, found in Ralstonia nicotianae (strain ATCC BAA-1114 / GMI1000) (Ralstonia solanacearum).